The primary structure comprises 243 residues: Glucosamine-6-phosphate deaminase (243 aa).

Asp-67 serves as the catalytic Proton acceptor; for enolization step. Residue Asn-137 is the For ring-opening step of the active site. His-139 acts as the Proton acceptor; for ring-opening step in catalysis. The active-site For ring-opening step is Glu-144.

The protein belongs to the glucosamine/galactosamine-6-phosphate isomerase family. NagB subfamily.

It carries out the reaction alpha-D-glucosamine 6-phosphate + H2O = beta-D-fructose 6-phosphate + NH4(+). It functions in the pathway amino-sugar metabolism; N-acetylneuraminate degradation; D-fructose 6-phosphate from N-acetylneuraminate: step 5/5. Catalyzes the reversible isomerization-deamination of glucosamine 6-phosphate (GlcN6P) to form fructose 6-phosphate (Fru6P) and ammonium ion. This is Glucosamine-6-phosphate deaminase from Staphylococcus epidermidis (strain ATCC 12228 / FDA PCI 1200).